A 330-amino-acid chain; its full sequence is Aspartate--ammonia ligase (330 aa).

Belongs to the class-II aminoacyl-tRNA synthetase family. AsnA subfamily.

It is found in the cytoplasm. It carries out the reaction L-aspartate + NH4(+) + ATP = L-asparagine + AMP + diphosphate + H(+). Its pathway is amino-acid biosynthesis; L-asparagine biosynthesis; L-asparagine from L-aspartate (ammonia route): step 1/1. This Streptococcus pyogenes serotype M49 (strain NZ131) protein is Aspartate--ammonia ligase.